Reading from the N-terminus, the 328-residue chain is Acyl-CoA wax alcohol acyltransferase 1 (328 aa).

A run of 2 helical transmembrane segments spans residues serine 12–leucine 32 and valine 34–phenylalanine 53.

The protein belongs to the diacylglycerol acyltransferase family. Predominantly expressed in skin, where it is limited to the sebaceous gland. Expressed in more mature, centrally located cells just before their rupture and sebum release. Also expressed in all tissues except spleen. Expressed at higher level in thymus, prostate and testis.

The protein localises to the endoplasmic reticulum membrane. It carries out the reaction a long chain fatty alcohol + a fatty acyl-CoA = a wax ester + CoA. The catalysed reaction is 1,2-di-(9Z-octadecenoyl)-sn-glycerol + (9Z)-octadecenoyl-CoA = 1,2,3-tri-(9Z-octadecenoyl)-glycerol + CoA. It catalyses the reaction hexadecan-1-ol + (9Z)-octadecenoyl-CoA = hexadecanyl (9Z)-octadecenoate + CoA. The enzyme catalyses decan-1-ol + (9Z)-octadecenoyl-CoA = 1-O-decyl-(9Z)-octadecenoate + CoA. It carries out the reaction (9Z)-hexadecen-1-ol + (9Z)-octadecenoyl-CoA = 1-O-(9Z)-hexadecenyl (9Z)-octadecenoate + CoA. The catalysed reaction is octadecan-1-ol + (9Z)-octadecenoyl-CoA = 1-O-octadecyl (9Z)-octadecenoate + CoA. It catalyses the reaction (9Z)-octadecen-1-ol + (9Z)-octadecenoyl-CoA = 1-O-(9Z)-octadecenyl (9Z)-octadecenoate + CoA. The enzyme catalyses hexadecan-1-ol + hexadecanoyl-CoA = hexadecanyl hexadecanoate + CoA. It carries out the reaction hexadecan-1-ol + (9Z)-hexadecenoyl-CoA = 1-O-hexadecyl (9Z)-hexadecenoate + CoA. The catalysed reaction is hexadecan-1-ol + octadecanoyl-CoA = hexadecanyl octadecanoate + CoA. It catalyses the reaction eicosan-1-ol + (9Z)-octadecenoyl-CoA = 1-O-eicosanyl (9Z)-octadecenoate + CoA. Acyltransferase that catalyzes the formation of ester bonds between fatty alcohols and fatty acyl-CoAs to form wax monoesters. Shows a strong preference for decyl alcohol (C10), with less activity towards C16 and C18 alcohols. Shows a strong preference for saturated acyl-CoAs. In Homo sapiens (Human), this protein is Acyl-CoA wax alcohol acyltransferase 1 (AWAT1).